Here is a 208-residue protein sequence, read N- to C-terminus: Imidazoleglycerol-phosphate dehydratase (208 aa).

It belongs to the imidazoleglycerol-phosphate dehydratase family.

Its subcellular location is the cytoplasm. It carries out the reaction D-erythro-1-(imidazol-4-yl)glycerol 3-phosphate = 3-(imidazol-4-yl)-2-oxopropyl phosphate + H2O. It functions in the pathway amino-acid biosynthesis; L-histidine biosynthesis; L-histidine from 5-phospho-alpha-D-ribose 1-diphosphate: step 6/9. The polypeptide is Imidazoleglycerol-phosphate dehydratase (Anaeromyxobacter dehalogenans (strain 2CP-1 / ATCC BAA-258)).